The following is a 382-amino-acid chain: D-galactonate dehydratase (382 aa).

Residue D183 coordinates Mg(2+). Catalysis depends on H185, which acts as the Proton donor. Residues E209 and E235 each coordinate Mg(2+). H285 functions as the Proton acceptor in the catalytic mechanism.

Belongs to the mandelate racemase/muconate lactonizing enzyme family. GalD subfamily. The cofactor is Mg(2+).

It catalyses the reaction D-galactonate = 2-dehydro-3-deoxy-D-galactonate + H2O. Its pathway is carbohydrate acid metabolism; D-galactonate degradation; D-glyceraldehyde 3-phosphate and pyruvate from D-galactonate: step 1/3. Functionally, catalyzes the dehydration of D-galactonate to 2-keto-3-deoxy-D-galactonate. The chain is D-galactonate dehydratase from Cronobacter sakazakii (strain ATCC BAA-894) (Enterobacter sakazakii).